We begin with the raw amino-acid sequence, 397 residues long: Tryptophan synthase beta chain (397 aa).

Lys-86 bears the N6-(pyridoxal phosphate)lysine mark.

The protein belongs to the TrpB family. In terms of assembly, tetramer of two alpha and two beta chains. Requires pyridoxal 5'-phosphate as cofactor.

It catalyses the reaction (1S,2R)-1-C-(indol-3-yl)glycerol 3-phosphate + L-serine = D-glyceraldehyde 3-phosphate + L-tryptophan + H2O. The protein operates within amino-acid biosynthesis; L-tryptophan biosynthesis; L-tryptophan from chorismate: step 5/5. Functionally, the beta subunit is responsible for the synthesis of L-tryptophan from indole and L-serine. The sequence is that of Tryptophan synthase beta chain from Aeromonas hydrophila subsp. hydrophila (strain ATCC 7966 / DSM 30187 / BCRC 13018 / CCUG 14551 / JCM 1027 / KCTC 2358 / NCIMB 9240 / NCTC 8049).